The primary structure comprises 631 residues: Serine/threonine-protein kinase PLK3 (631 aa).

The disordered stretch occupies residues 1 to 59 (MEPAAGFLSPRPFPRAAVPSAPPAGPGPPANASPRSEPEVLAGPRAPDPPGRLITDPLS). Residues 20–31 (SAPPAGPGPPAN) show a composition bias toward pro residues. One can recognise a Protein kinase domain in the interval 63-315 (YTKGRLLGKG…IEQILRHDFF (253 aa)). ATP contacts are provided by residues 69 to 77 (LGKGGFARC) and K92. The active-site Proton acceptor is D186. 2 POLO box domains span residues 448–526 (WVSK…YMEQ) and 547–630 (LLLQ…DQSP).

Belongs to the protein kinase superfamily. Ser/Thr protein kinase family. CDC5/Polo subfamily. Interacts (via the POLO-box domain) with CIB1; leading to inhibit PLK3 kinase activity. Interacts with GOLGB1. Phosphorylated in an ATM-dependent manner following DNA damage. Phosphorylated as cells enter mitosis and dephosphorylated as cells exit mitosis. As to expression, expressed in skin.

Its subcellular location is the cytoplasm. It localises to the nucleus. It is found in the nucleolus. The protein localises to the golgi apparatus. The protein resides in the cytoskeleton. Its subcellular location is the microtubule organizing center. It localises to the centrosome. The enzyme catalyses L-seryl-[protein] + ATP = O-phospho-L-seryl-[protein] + ADP + H(+). It carries out the reaction L-threonyl-[protein] + ATP = O-phospho-L-threonyl-[protein] + ADP + H(+). Its function is as follows. Serine/threonine-protein kinase involved in cell cycle regulation, response to stress and Golgi disassembly. Polo-like kinases act by binding and phosphorylating proteins that are already phosphorylated on a specific motif recognized by the POLO box domains. Phosphorylates ATF2, BCL2L1, CDC25A, CDC25C, CHEK2, HIF1A, JUN, p53/TP53, p73/TP73, PTEN, TOP2A and VRK1. Involved in cell cycle regulation: required for entry into S phase and cytokinesis. Phosphorylates BCL2L1, leading to regulate the G2 checkpoint and progression to cytokinesis during mitosis. Plays a key role in response to stress: rapidly activated upon stress stimulation, such as ionizing radiation, reactive oxygen species (ROS), hyperosmotic stress, UV irradiation and hypoxia. Involved in DNA damage response and G1/S transition checkpoint by phosphorylating CDC25A, p53/TP53 and p73/TP73. Phosphorylates p53/TP53 in response to reactive oxygen species (ROS), thereby promoting p53/TP53-mediated apoptosis. Phosphorylates CHEK2 in response to DNA damage, promoting the G2/M transition checkpoint. Phosphorylates the transcription factor p73/TP73 in response to DNA damage, leading to inhibit p73/TP73-mediated transcriptional activation and pro-apoptotic functions. Phosphorylates HIF1A and JUN is response to hypoxia. Phosphorylates ATF2 following hyperosmotic stress in corneal epithelium. Also involved in Golgi disassembly during the cell cycle: part of a MEK1/MAP2K1-dependent pathway that induces Golgi fragmentation during mitosis by mediating phosphorylation of VRK1. May participate in endomitotic cell cycle, a form of mitosis in which both karyokinesis and cytokinesis are interrupted and is a hallmark of megakaryocyte differentiation, via its interaction with CIB1. In Mus musculus (Mouse), this protein is Serine/threonine-protein kinase PLK3 (Plk3).